The primary structure comprises 265 residues: Probable ribose-5-phosphate isomerase 2 (265 aa).

N-acetylalanine is present on Ala-2. Phosphoserine is present on Ser-96.

This sequence belongs to the ribose 5-phosphate isomerase family.

Its subcellular location is the cytoplasm. It carries out the reaction aldehydo-D-ribose 5-phosphate = D-ribulose 5-phosphate. The protein operates within carbohydrate degradation; pentose phosphate pathway; D-ribose 5-phosphate from D-ribulose 5-phosphate (non-oxidative stage): step 1/1. Catalyzes the reversible conversion of ribose-5-phosphate to ribulose 5-phosphate. This Arabidopsis thaliana (Mouse-ear cress) protein is Probable ribose-5-phosphate isomerase 2 (RPI2).